A 505-amino-acid polypeptide reads, in one-letter code: N-succinylglutamate 5-semialdehyde dehydrogenase (505 aa).

234-239 serves as a coordination point for NAD(+); it reads GSAHTG. Active-site residues include glutamate 257 and cysteine 291.

This sequence belongs to the aldehyde dehydrogenase family. AstD subfamily.

It catalyses the reaction N-succinyl-L-glutamate 5-semialdehyde + NAD(+) + H2O = N-succinyl-L-glutamate + NADH + 2 H(+). Its pathway is amino-acid degradation; L-arginine degradation via AST pathway; L-glutamate and succinate from L-arginine: step 4/5. Catalyzes the NAD-dependent reduction of succinylglutamate semialdehyde into succinylglutamate. This chain is N-succinylglutamate 5-semialdehyde dehydrogenase, found in Yersinia pseudotuberculosis serotype IB (strain PB1/+).